The sequence spans 221 residues: Carbonic anhydrase (221 aa).

4 residues coordinate Zn(2+): Cys-38, Asp-40, His-99, and Cys-102.

It belongs to the beta-class carbonic anhydrase family. Zn(2+) serves as cofactor.

It carries out the reaction hydrogencarbonate + H(+) = CO2 + H2O. The protein is Carbonic anhydrase (cynT) of Helicobacter pylori (strain J99 / ATCC 700824) (Campylobacter pylori J99).